A 299-amino-acid polypeptide reads, in one-letter code: Small ribosomal subunit protein uS3 (299 aa).

The region spanning Val39–Arg107 is the KH type-2 domain. A disordered region spans residues Pro214 to Glu299. The segment covering Lys217–Ala248 has biased composition (basic and acidic residues). Positions Ala257–Ala282 are enriched in low complexity.

This sequence belongs to the universal ribosomal protein uS3 family. In terms of assembly, part of the 30S ribosomal subunit. Forms a tight complex with proteins S10 and S14.

Binds the lower part of the 30S subunit head. Binds mRNA in the 70S ribosome, positioning it for translation. This chain is Small ribosomal subunit protein uS3, found in Methylibium petroleiphilum (strain ATCC BAA-1232 / LMG 22953 / PM1).